A 208-amino-acid polypeptide reads, in one-letter code: Pyrophosphate-energized proton pump 2 (208 aa).

5 helical membrane-spanning segments follow: residues 19–39 (AYPL…TFFV), 54–74 (GLIV…SFTI), 89–109 (GGNL…IVVI), 140–160 (LAVS…GIIA), and 167–187 (LFGT…IVAL).

Belongs to the H(+)-translocating pyrophosphatase (TC 3.A.10) family. Homodimer. It depends on Mg(2+) as a cofactor.

It is found in the cell inner membrane. The enzyme catalyses diphosphate + H2O + H(+)(in) = 2 phosphate + 2 H(+)(out). Functionally, proton pump that utilizes the energy of pyrophosphate hydrolysis as the driving force for proton movement across the membrane. Generates a proton motive force. This Mycoplana dimorpha protein is Pyrophosphate-energized proton pump 2 (hppA2).